Here is a 352-residue protein sequence, read N- to C-terminus: S-norcoclaurine synthase 1 (352 aa).

The Fe2OG dioxygenase domain occupies 200–304; the sequence is KPLRTVFNRE…RLSIAAFHDP (105 aa). H228, D230, and H285 together coordinate Fe cation.

Belongs to the iron/ascorbate-dependent oxidoreductase family. In terms of assembly, monomer. Requires Fe cation as cofactor.

It carries out the reaction (4-hydroxyphenyl)acetaldehyde + dopamine = (S)-norcoclaurine + H2O. Its activity is regulated as follows. Inhibited by O-phenanthroline, but not by EDTA. Functionally, involved in the biosynthesis of the common precursor of all benzylisoquinoline alkaloids such as morphine, sanguinarine, codeine or berberine. Condenses dopamine and phenylacetaldehyde, 3,4-dihydrophenylacetaldehyde or 4-hydroxyphenylacetaldehyde. This chain is S-norcoclaurine synthase 1 (NCS1), found in Coptis japonica (Japanese goldthread).